The sequence spans 371 residues: Cytochrome b (371 aa).

A run of 4 helical transmembrane segments spans residues 25–45 (FGSM…FLAV), 69–90 (WMMQ…YIHI), 105–125 (WLSG…GYVL), and 170–190 (FSAL…LHIM). Residues His-75 and His-89 each coordinate heme b. The heme b site is built by His-174 and His-188. His-193 serves as a coordination point for a ubiquinone. Transmembrane regions (helical) follow at residues 218–238 (YKDL…VSFL), 280–300 (LGGA…PFTH), 312–332 (IMQL…WSAT), and 339–358 (FTVI…IMNP).

The protein belongs to the cytochrome b family. As to quaternary structure, the cytochrome bc1 complex contains 3 respiratory subunits (MT-CYB, CYC1 and UQCRFS1), 2 core proteins (UQCRC1 and UQCRC2) and probably 6 low-molecular weight proteins. Requires heme b as cofactor.

The protein resides in the mitochondrion inner membrane. Component of the ubiquinol-cytochrome c reductase complex (complex III or cytochrome b-c1 complex) that is part of the mitochondrial respiratory chain. The b-c1 complex mediates electron transfer from ubiquinol to cytochrome c. Contributes to the generation of a proton gradient across the mitochondrial membrane that is then used for ATP synthesis. The polypeptide is Cytochrome b (MT-CYB) (Eryx elegans (Central Asian sand boa)).